Consider the following 571-residue polypeptide: MEEPPLLPGETIKDMAKDVTYICPFTGAIRGTLTVTNYRLYFKSMERDPPFVLDASLGVINRVEKIGGASSRGENSYGLEIVCKDIRNLRFAHKPEGRTRRSIFENLMKYAFPVSNNLPLFAFEYKEVFPENGWKVYDPIWEYRRQGIPNESWRLSKINEHYELCDTYPAILAVPVNIPDEELKRVASFRSRGRIPVLSWIHPESQATITRCSQPMVGVSGKRSKEDEKYLQAIMDSNAQSHKIFIFDARPSVNAVANKAKGGGYESEDAYQNAELVFLDIHNIHVMRESLRKLKEIVYPNIEETHWLSNLESTHWLEHIKLILAGALRIADKVESGKTSVVVHCSDGWDRTAQLTSLSLLMLDGYYRTIRGFEVLVEKEWLSFGHRFQLRVGHGDKNHADADRSPVFLQFIDCVWQMTRQFPTAFEFNEYFLITILDHLYSCLFGTFLCSSEQQRVKESLPKKTVSLWSYINSQLEDFTNPLYVSYSNHVLYPVASMRHLELWVGYYIRWNPRMKPQEPVHNRYKELLAKRAELQKKVEELQREITNRSTSSSERAGSPAQCVTPVQTVV.

In terms of domain architecture, GRAM spans Met1–Gly67. The Myotubularin phosphatase domain maps to Gly133 to Tyr508. Residues Asn258, Asn283, and Ile284 each contribute to the a 1,2-diacyl-sn-glycero-3-phospho-(1D-myo-inositol-3,5-bisphosphate) site. Asn258, Asn283, and Ile284 together coordinate a 1,2-diacyl-sn-glycero-3-phospho-(1D-myo-inositol-3-phosphate). Cys345 (phosphocysteine intermediate) is an active-site residue. Residues Ser346, Asp347, Gly348, Trp349, Asp350, Arg351, Arg387, and Arg391 each contribute to the a 1,2-diacyl-sn-glycero-3-phospho-(1D-myo-inositol-3,5-bisphosphate) site. A 1,2-diacyl-sn-glycero-3-phospho-(1D-myo-inositol-3-phosphate)-binding residues include Ser346, Asp347, Gly348, Trp349, Asp350, and Arg351. Residue Arg391 coordinates a 1,2-diacyl-sn-glycero-3-phospho-(1D-myo-inositol-3-phosphate). Positions Val521–Ser553 form a coiled coil. The tract at residues Arg544–Val571 is disordered.

Belongs to the protein-tyrosine phosphatase family. Non-receptor class myotubularin subfamily. Homooligomer and heterooligomer.

It localises to the cytoplasm. The protein resides in the early endosome membrane. The catalysed reaction is a 1,2-diacyl-sn-glycero-3-phospho-(1D-myo-inositol-3,5-bisphosphate) + H2O = a 1,2-diacyl-sn-glycero-3-phospho-(1D-myo-inositol-5-phosphate) + phosphate. It carries out the reaction a 1,2-diacyl-sn-glycero-3-phospho-(1D-myo-inositol-3-phosphate) + H2O = a 1,2-diacyl-sn-glycero-3-phospho-(1D-myo-inositol) + phosphate. The enzyme catalyses 1,2-dioctanoyl-sn-glycero-3-phospho-(1-D-myo-inositol-3-phosphate) + H2O = 1,2-dioctanoyl-sn-glycero-3-phospho-(1D-myo-inositol) + phosphate. It catalyses the reaction 1,2-dioctanoyl-sn-glycero-3-phospho-(1D-myo-inositol-3,5-bisphosphate) + H2O = 1,2-dioctanoyl-sn-glycero-3-phospho-(1D-myo-inositol-5-phosphate) + phosphate. Its function is as follows. Lipid phosphatase that specifically dephosphorylates the D-3 position of phosphatidylinositol 3-phosphate and phosphatidylinositol 3,5-bisphosphate, generating phosphatidylinositol and phosphatidylinositol 5-phosphate. Regulates the level of these phosphoinositides critical for various biological processes including autophagy initiation and autophagosome maturation. This chain is Phosphatidylinositol-3,5-bisphosphate 3-phosphatase MTMR2, found in Gallus gallus (Chicken).